A 168-amino-acid chain; its full sequence is Nascent polypeptide-associated complex subunit alpha (168 aa).

In terms of domain architecture, NAC-A/B spans 14–78; the sequence is SKNEKKAREL…PKVDDFTRRL (65 aa). The disordered stretch occupies residues 83 to 129; the sequence is QQAASAAKDPQSIQADMAAAAAAPAAPAAPAAAPEEDEAGQVDESGL. Low complexity predominate over residues 100-115; it reads AAAAAAPAAPAAPAAA. Residues 129 to 168 enclose the UBA domain; it reads LDGQDIELVMQQANVSRNKAVKALREHNSDIVNAIMSLSK.

Belongs to the NAC-alpha family. In terms of assembly, part of the nascent polypeptide-associated complex (NAC), consisting of EGD2 and EGD1. NAC associates with ribosomes via EGD1.

Its subcellular location is the cytoplasm. The protein localises to the nucleus. Functionally, component of the nascent polypeptide-associated complex (NAC), a dynamic component of the ribosomal exit tunnel, protecting the emerging polypeptides from interaction with other cytoplasmic proteins to ensure appropriate nascent protein targeting. The NAC complex also promotes mitochondrial protein import by enhancing productive ribosome interactions with the outer mitochondrial membrane and blocks the inappropriate interaction of ribosomes translating non-secretory nascent polypeptides with translocation sites in the membrane of the endoplasmic reticulum. EGD2 may also be involved in transcription regulation. This Eremothecium gossypii (strain ATCC 10895 / CBS 109.51 / FGSC 9923 / NRRL Y-1056) (Yeast) protein is Nascent polypeptide-associated complex subunit alpha (EGD2).